We begin with the raw amino-acid sequence, 301 residues long: uncharacterized protein (301 aa).

The region spanning Tyr-27–Leu-85 is the FHA domain. Positions Thr-187–Ser-236 are disordered. Ser-204 carries the phosphoserine modification. The span at Lys-216–Leu-226 shows a compositional bias: basic and acidic residues. A Phosphoserine modification is found at Ser-231.

As to quaternary structure, interacts with sad1.

Its subcellular location is the nucleus. This is an uncharacterized protein from Schizosaccharomyces pombe (strain 972 / ATCC 24843) (Fission yeast).